We begin with the raw amino-acid sequence, 231 residues long: Protoporphyrinogen IX dehydrogenase [quinone] (231 aa).

The Flavodoxin-like domain occupies C8–A178. FMN contacts are provided by residues T14–H18 and F90–S158. Residues C208 to A228 traverse the membrane as a helical segment.

The protein belongs to the HemG family. Requires FMN as cofactor.

The protein localises to the membrane. It carries out the reaction protoporphyrinogen IX + 3 a menaquinone = protoporphyrin IX + 3 a menaquinol. The enzyme catalyses protoporphyrinogen IX + 3 a ubiquinone = protoporphyrin IX + 3 a ubiquinol. The catalysed reaction is protoporphyrinogen IX + 3 a quinone = protoporphyrin IX + 3 a quinol. It participates in porphyrin-containing compound metabolism; protoporphyrin-IX biosynthesis; protoporphyrin-IX from protoporphyrinogen-IX: step 1/1. In terms of biological role, in E.coli extracts under anerobic conditions catalyzes the 6-electron oxidation of protoporphyrinogen IX to form protoporphyrin IX, transferring electrons to fumarate reductase, presumably via menaquinone. In vitro under aerobic conditions forms protoporphyrin IX using ubiquinone as an electron acceptor. Complements an E.coli hemG deletion, allowing normal growth in vivo. This chain is Protoporphyrinogen IX dehydrogenase [quinone], found in Leishmania major.